Consider the following 172-residue polypeptide: Small ribosomal subunit protein uS5 (172 aa).

The 64-residue stretch at 17-80 folds into the S5 DRBM domain; the sequence is LKEKMIQVNR…DAARRDMVKV (64 aa).

It belongs to the universal ribosomal protein uS5 family. As to quaternary structure, part of the 30S ribosomal subunit. Contacts proteins S4 and S8.

In terms of biological role, with S4 and S12 plays an important role in translational accuracy. Located at the back of the 30S subunit body where it stabilizes the conformation of the head with respect to the body. The polypeptide is Small ribosomal subunit protein uS5 (Methylibium petroleiphilum (strain ATCC BAA-1232 / LMG 22953 / PM1)).